Reading from the N-terminus, the 156-residue chain is 6,7-dimethyl-8-ribityllumazine synthase (156 aa).

5-amino-6-(D-ribitylamino)uracil contacts are provided by residues F22, 57–59 (AYE), and 81–83 (SVI). 86–87 (GT) is a binding site for (2S)-2-hydroxy-3-oxobutyl phosphate. Catalysis depends on H89, which acts as the Proton donor. F114 provides a ligand contact to 5-amino-6-(D-ribitylamino)uracil. Residue R128 participates in (2S)-2-hydroxy-3-oxobutyl phosphate binding.

It belongs to the DMRL synthase family. Forms an icosahedral capsid composed of 60 subunits, arranged as a dodecamer of pentamers.

It carries out the reaction (2S)-2-hydroxy-3-oxobutyl phosphate + 5-amino-6-(D-ribitylamino)uracil = 6,7-dimethyl-8-(1-D-ribityl)lumazine + phosphate + 2 H2O + H(+). It participates in cofactor biosynthesis; riboflavin biosynthesis; riboflavin from 2-hydroxy-3-oxobutyl phosphate and 5-amino-6-(D-ribitylamino)uracil: step 1/2. Its function is as follows. Catalyzes the formation of 6,7-dimethyl-8-ribityllumazine by condensation of 5-amino-6-(D-ribitylamino)uracil with 3,4-dihydroxy-2-butanone 4-phosphate. This is the penultimate step in the biosynthesis of riboflavin. The polypeptide is 6,7-dimethyl-8-ribityllumazine synthase (Photobacterium profundum (strain SS9)).